Reading from the N-terminus, the 269-residue chain is Eukaryotic translation initiation factor 3 subunit G-1 (269 aa).

Residues 188-266 form the RRM domain; sequence AAIRISNLSE…LILSVEWSKP (79 aa).

Belongs to the eIF-3 subunit G family. As to quaternary structure, component of the eukaryotic translation initiation factor 3 (eIF-3) complex. The eIF-3 complex interacts with pix.

The protein resides in the cytoplasm. RNA-binding component of the eukaryotic translation initiation factor 3 (eIF-3) complex, which is involved in protein synthesis of a specialized repertoire of mRNAs and, together with other initiation factors, stimulates binding of mRNA and methionyl-tRNAi to the 40S ribosome. The eIF-3 complex specifically targets and initiates translation of a subset of mRNAs involved in cell proliferation. This subunit can bind 18S rRNA. The chain is Eukaryotic translation initiation factor 3 subunit G-1 from Drosophila erecta (Fruit fly).